The primary structure comprises 211 residues: Thioredoxin domain-containing protein 9 homolog (211 aa).

Positions 68–178 (YSEIHSEKDF…LEERIARAQV (111 aa)) constitute a Thioredoxin domain. A compositionally biased stretch (polar residues) spans 184–203 (ESSSLKPKSTTQVRRNVRQS). The tract at residues 184–211 (ESSSLKPKSTTQVRRNVRQSARSDSDSE) is disordered.

The protein is Thioredoxin domain-containing protein 9 homolog of Arabidopsis thaliana (Mouse-ear cress).